We begin with the raw amino-acid sequence, 317 residues long: Melanocyte-stimulating hormone receptor (317 aa).

At Met-1–Glu-37 the chain is on the extracellular side. Asn-29 carries N-linked (GlcNAc...) asparagine glycosylation. The chain crosses the membrane as a helical span at residues Val-38 to Ile-63. Topologically, residues Ala-64–Pro-72 are cytoplasmic. The chain crosses the membrane as a helical span at residues Thr-73 to Leu-93. At Glu-94–Asn-118 the chain is on the extracellular side. A helical membrane pass occupies residues Val-119–Val-140. Residues Asp-141 to Gln-163 lie on the Cytoplasmic side of the membrane. The helical transmembrane segment at Ala-164–Tyr-183 threads the bilayer. Residues Asp-184–Cys-191 lie on the Extracellular side of the membrane. The chain crosses the membrane as a helical span at residues Leu-192–Leu-211. The Cytoplasmic segment spans residues Ala-212 to Ala-240. Residues Val-241–Leu-266 form a helical membrane-spanning segment. Residues Cys-267–Asn-279 lie on the Extracellular side of the membrane. Residues Phe-280–Phe-300 form a helical membrane-spanning segment. Residues Arg-301–Trp-317 lie on the Cytoplasmic side of the membrane. A lipid anchor (S-palmitoyl cysteine) is attached at Cys-315.

Belongs to the G-protein coupled receptor 1 family. In terms of assembly, interacts with MGRN1, but does not undergo MGRN1-mediated ubiquitination; this interaction competes with GNAS-binding and thus inhibits agonist-induced cAMP production. Interacts with OPN3; the interaction results in a decrease in MC1R-mediated cAMP signaling and ultimately a decrease in melanin production in melanocytes.

Its subcellular location is the cell membrane. Its function is as follows. Receptor for MSH (alpha, beta and gamma) and ACTH. The activity of this receptor is mediated by G proteins which activate adenylate cyclase. Mediates melanogenesis, the production of eumelanin (black/brown) and phaeomelanin (red/yellow), via regulation of cAMP signaling in melanocytes. This is Melanocyte-stimulating hormone receptor (MC1R) from Hylobates muelleri (Mueller's Bornean gibbon).